Reading from the N-terminus, the 212-residue chain is Protein G1-like7 (212 aa).

Residues 1-22 (MDPSGPGPSSAAAGGAPAVAAA) show a composition bias toward low complexity. Disordered stretches follow at residues 1 to 34 (MDPS…RYES) and 148 to 212 (KARG…PSAS). The region spanning 31-158 (RYESQKRRDW…ARGIPYEKKK (128 aa)) is the ALOG domain. Residues 156 to 160 (KKKRK) carry the Nuclear localization signal motif. Over residues 173–182 (SGSSSAAAAA) the composition is skewed to low complexity. Over residues 183-194 (AGGGDTGSGGGA) the composition is skewed to gly residues.

The protein belongs to the plant homeotic and developmental regulators ALOG protein family.

Its subcellular location is the nucleus. Functionally, probable transcription regulator that acts as a developmental regulator by promoting cell growth in response to light. The sequence is that of Protein G1-like7 from Oryza sativa subsp. indica (Rice).